We begin with the raw amino-acid sequence, 210 residues long: MALLTAKTFSLQFNNKRRVNKPYYPRKALLCYQLTPQNGSTPTRGHLKNKKKDHAEIRFINKIKSMGLDETQCYQVTCYLTWSPCPSCAGELVDFIKAHRHLNLRIFASRLYYHWRPNYQEGLLLLCGSQVPVEVMGLPEFTDCWENFVDHKEPPSFNPSEKLEELDKNSQAIKRRLERIKSRSVDVLENGLRSLQLGPVTPSSSIRNSR.

Positions 4-126 (LTAKTFSLQF…PNYQEGLLLL (123 aa)) constitute a CMP/dCMP-type deaminase domain. A Zn(2+)-binding site is contributed by His54. The active-site Proton donor is the Glu56. Zn(2+) contacts are provided by Cys85 and Cys88. The segment at 182 to 210 (SRSVDVLENGLRSLQLGPVTPSSSIRNSR) is necessary and sufficient for localization to the cytoplasm.

It belongs to the cytidine and deoxycytidylate deaminase family. As to quaternary structure, homodimer. Zn(2+) serves as cofactor.

Its subcellular location is the cytoplasm. The enzyme catalyses a 2'-deoxycytidine in single-stranded DNA + H2O + H(+) = a 2'-deoxyuridine in single-stranded DNA + NH4(+). Its activity is regulated as follows. Antiviral activity is neutralized by the simian immunodeficiency virus rhesus (SIV-mac) virion infectivity factor (VIF). In terms of biological role, DNA deaminase (cytidine deaminase) which acts as an inhibitor of retrovirus replication and retrotransposon mobility via deaminase-dependent and -independent mechanisms. Exhibits antiviral activity against vif-deficient HIV-1. After the penetration of retroviral nucleocapsids into target cells of infection and the initiation of reverse transcription, it can induce the conversion of cytosine to uracil in the minus-sense single-strand viral DNA, leading to G-to-A hypermutations in the subsequent plus-strand viral DNA. The resultant detrimental levels of mutations in the proviral genome, along with a deamination-independent mechanism that works prior to the proviral integration, together exert efficient antiretroviral effects in infected target cells. Selectively targets single-stranded DNA and does not deaminate double-stranded DNA or single- or double-stranded RNA. In Macaca mulatta (Rhesus macaque), this protein is DNA dC-&gt;dU-editing enzyme APOBEC-3H.